The sequence spans 420 residues: Small ribosomal subunit protein mS75 (420 aa).

Residues 1–11 (MYNLSRIIYRF) constitute a mitochondrion transit peptide. 2 disordered regions span residues 99-120 (RQKN…DVMS) and 390-420 (RYSP…GKQT). Over residues 102–114 (NAANPSSDNTPSD) the composition is skewed to polar residues. Basic residues predominate over residues 396 to 409 (QKRRSKRKQKRKER).

In terms of assembly, component of the mitochondrial ribosome small subunit. In terms of tissue distribution, expressed at high levels in reproductive organs and, at lower levels, ubiquitously.

The protein localises to the mitochondrion. In terms of biological role, essential for fertility (male and female gametophyte functions and development). Required for the integrity of female gametic mitochondria. Modulates male gametophyte functions, including pollen tube growth and style penetration. Involved in mitochondrial-driven cell-to-cell communication in embryo sacs during female gametes maturation (including embryogenesis initiation and endosperm development), especially for reciprocal signaling between central and egg cells which regulates reciprocal development. This is Small ribosomal subunit protein mS75 from Arabidopsis thaliana (Mouse-ear cress).